Reading from the N-terminus, the 212-residue chain is Phosphoenolpyruvate guanylyltransferase (212 aa).

Phosphoenolpyruvate is bound by residues T139, G155, and S158.

This sequence belongs to the CofC family.

The catalysed reaction is phosphoenolpyruvate + GTP + H(+) = enolpyruvoyl-2-diphospho-5'-guanosine + diphosphate. The protein operates within cofactor biosynthesis; coenzyme F420 biosynthesis. Functionally, guanylyltransferase that catalyzes the activation of phosphoenolpyruvate (PEP) as enolpyruvoyl-2-diphospho-5'-guanosine, via the condensation of PEP with GTP. It is involved in the biosynthesis of coenzyme F420, a hydride carrier cofactor. This Streptomyces coelicolor (strain ATCC BAA-471 / A3(2) / M145) protein is Phosphoenolpyruvate guanylyltransferase.